Reading from the N-terminus, the 146-residue chain is Dual specificity phosphatase Cdc25 (146 aa).

The region spanning 34–135 is the Rhodanese domain; that stretch reads RRPNIAIIDV…WEASGKPVCR (102 aa). 45–48 is a binding site for substrate; the sequence is DEER. His53 provides a ligand contact to Zn(2+). A substrate-binding site is contributed by 68 to 71; the sequence is KISH. Cys86 acts as the Cysteine persulfide intermediate in catalysis. A substrate-binding site is contributed by 90 to 92; the sequence is QVR. The Zn(2+) site is built by Cys134, Cys136, and Cys141.

Belongs to the MPI phosphatase family. In terms of tissue distribution, expressed in roots and at lower levels in shoots (at protein level). Expressed in leaves, stems and flowers.

It is found in the nucleus. The enzyme catalyses O-phospho-L-tyrosyl-[protein] + H2O = L-tyrosyl-[protein] + phosphate. It carries out the reaction [glutaredoxin]-dithiol + arsenate + glutathione + H(+) = glutathionyl-S-S-[glutaredoxin] + arsenite + H2O. Its activity is regulated as follows. Inhibited by NSC95397. In terms of biological role, tyrosine protein phosphatase that dephosphorylates CDK complex and activate its kinase activity in vitro. Arsenate reductase that plays a major role in the reduction of arsenate to arsenite and arsenic retention in roots. Has an in vitro and in vivo arsenate reductase activity. Plays no role in arsenic metabolism. This chain is Dual specificity phosphatase Cdc25, found in Arabidopsis thaliana (Mouse-ear cress).